We begin with the raw amino-acid sequence, 178 residues long: Caveolin-1 (178 aa).

N-acetylserine is present on S2. A Phosphoserine modification is found at S2. The segment at 2–94 (SGGKYVDSEG…WKASFTTFTV (93 aa)) is required for homooligomerization. Residues 2-104 (SGGKYVDSEG…TKYWFYRLLS (103 aa)) are Cytoplasmic-facing. K5 carries the N6-acetyllysine; alternate modification. Residue K5 forms a Glycyl lysine isopeptide (Lys-Gly) (interchain with G-Cter in ubiquitin); alternate linkage. Position 6 is a phosphotyrosine (Y6). A Phosphoserine modification is found at S9. The residue at position 14 (Y14) is a Phosphotyrosine; by ABL1 and INSR. Y25 is modified (phosphotyrosine). Residues K26, K30, K39, K47, and K57 each participate in a glycyl lysine isopeptide (Lys-Gly) (interchain with G-Cter in ubiquitin) cross-link. Positions 82 to 94 (DGIWKASFTTFTV) are interaction with CAVIN3. Positions 105–125 (TIFGIPMALIWGIYFAILSFL) form an intramembrane region, helical. Residues 126-178 (HIWAVVPCIKSFLIEIQCISRVYSIYVHTFCDPLFEAIGKIFSNIRISTQKEI) are Cytoplasmic-facing. The tract at residues 131-142 (VPCIKSFLIEIQ) is interacts with SPRY1, SPRY2, SPRY3 and SPRY4. Residues C133, C143, and C156 are each lipidated (S-palmitoyl cysteine). Residues 149-160 (SIYVHTFCDPLF) are interacts with SPRY1, SPRY2, and SPRY4. Residues 167–178 (FSNIRISTQKEI) form an interacts with SPRY1, SPRY2, SPRY3 and SPRY4 region.

This sequence belongs to the caveolin family. In terms of assembly, homooligomer. Interacts (via the N-terminus) with DPP4; the interaction is direct. Forms a stable heterooligomeric complex with CAV2 that targets to lipid rafts and drives caveolae formation. Interacts with BMX, BTK, CTNNB1, CDH1, GLIPR2, JUP, NOSTRIN, SNAP25 and STX1A. Interacts with SLC7A9. Interacts with TGFBR1. Interacts with CTNNB1, CDH1 and JUP. Interacts with PACSIN2; this interaction induces membrane tubulation. Interacts with CAVIN3 (via leucine-zipper domain) in a cholesterol-sensitive manner. Interacts with EHD2 in a cholesterol-dependent manner. Interacts with CAVIN1. Forms a ternary complex with UBXN6 and VCP; mediates CAV1 targeting to lysosomes for degradation. Interacts with ABCG1; this interaction regulates ABCG1-mediated cholesterol efflux. Interacts with NEU3; this interaction enhances NEU3 sialidase activity within caveola. Interacts (via C-terminus) with SPRY1, SPRY2 (via C-terminus), SPRY3, and SPRY4. Interacts with IGFBP5; this interaction allows trafficking of IGFBP5 from the plasma membrane to the nucleus. In terms of processing, the N-terminus of both isoforms are blocked. Post-translationally, phosphorylated at Tyr-14 by ABL1 in response to oxidative stress. Ubiquitinated. Undergo monoubiquitination and multi- and/or polyubiquitination. Monoubiquitination of N-terminal lysines promotes integration in a ternary complex with UBXN6 and VCP which promotes oligomeric CAV1 targeting to lysosomes for degradation. Ubiquitinated by ZNRF1; leading to degradation and modulation of the TLR4-mediated immune response. Adipose tissue, lung, heart, skeletal muscle, stomach, small bowel, kidney, spleen and testis (at protein level).

It localises to the golgi apparatus membrane. Its subcellular location is the cell membrane. The protein resides in the membrane. It is found in the caveola. The protein localises to the membrane raft. It localises to the golgi apparatus. Its subcellular location is the trans-Golgi network. In terms of biological role, may act as a scaffolding protein within caveolar membranes. Forms a stable heterooligomeric complex with CAV2 that targets to lipid rafts and drives caveolae formation. Mediates the recruitment of CAVIN proteins (CAVIN1/2/3/4) to the caveolae. Interacts directly with G-protein alpha subunits and can functionally regulate their activity. Involved in the costimulatory signal essential for T-cell receptor (TCR)-mediated T-cell activation. Its binding to DPP4 induces T-cell proliferation and NF-kappa-B activation in a T-cell receptor/CD3-dependent manner. Recruits CTNNB1 to caveolar membranes and may regulate CTNNB1-mediated signaling through the Wnt pathway. Negatively regulates TGFB1-mediated activation of SMAD2/3 by mediating the internalization of TGFBR1 from membrane rafts leading to its subsequent degradation. Binds 20(S)-hydroxycholesterol (20(S)-OHC). This chain is Caveolin-1 (Cav1), found in Mus musculus (Mouse).